The sequence spans 416 residues: MKIYLVGGAVRDSLLNLPIKDKDYLVVGATPEQMLQLGYRQVGKDFPVFLHPKNQQEYALARTERKIGLGYGGFSCHASPDVTLEQDLLRRDLTINAIAQDEKGNLYDPFNGIEDLNARLLRHVSDAFVEDPLRILRVARFAARFHALGFHIAAETLALMRQISASDELNALTAERVWQEVDKSLGGPHPEVFFEVLHQCGALEVLFPEIFALFGVPQPEKWHPEIDTGVHTLMVLAQAALLTDDKSVRFAALVHDLGKALSPKEHLPKHHGHGQKGLPLIKALCTRLRVPNETRDLALLVSDQHQNVHQAFELRAETIVKIFDKADFWRKPERLTQLILACIADMRGRTGFENNPYPQGEYLTQCFLAANNVDIAAIIAAGFQGAEIKQALNLRRIEAVSQFKQKMQTKLPTDEQ.

Residues G8 and R11 each coordinate ATP. 2 residues coordinate CTP: G8 and R11. Residues D21 and D23 each contribute to the Mg(2+) site. The ATP site is built by R91, R137, and R140. 3 residues coordinate CTP: R91, R137, and R140. In terms of domain architecture, HD spans 228-329 (TGVHTLMVLA…VKIFDKADFW (102 aa)).

It belongs to the tRNA nucleotidyltransferase/poly(A) polymerase family. Bacterial CCA-adding enzyme type 1 subfamily. As to quaternary structure, monomer. Can also form homodimers and oligomers. Requires Mg(2+) as cofactor. It depends on Ni(2+) as a cofactor.

It carries out the reaction a tRNA precursor + 2 CTP + ATP = a tRNA with a 3' CCA end + 3 diphosphate. The enzyme catalyses a tRNA with a 3' CCA end + 2 CTP + ATP = a tRNA with a 3' CCACCA end + 3 diphosphate. Functionally, catalyzes the addition and repair of the essential 3'-terminal CCA sequence in tRNAs without using a nucleic acid template. Adds these three nucleotides in the order of C, C, and A to the tRNA nucleotide-73, using CTP and ATP as substrates and producing inorganic pyrophosphate. tRNA 3'-terminal CCA addition is required both for tRNA processing and repair. Also involved in tRNA surveillance by mediating tandem CCA addition to generate a CCACCA at the 3' terminus of unstable tRNAs. While stable tRNAs receive only 3'-terminal CCA, unstable tRNAs are marked with CCACCA and rapidly degraded. This chain is Multifunctional CCA protein, found in Shewanella baltica (strain OS223).